The chain runs to 673 residues: Glycine--tRNA ligase beta subunit (673 aa).

It belongs to the class-II aminoacyl-tRNA synthetase family. In terms of assembly, tetramer of two alpha and two beta subunits.

It localises to the cytoplasm. It catalyses the reaction tRNA(Gly) + glycine + ATP = glycyl-tRNA(Gly) + AMP + diphosphate. The polypeptide is Glycine--tRNA ligase beta subunit (Lactococcus lactis subsp. lactis (strain IL1403) (Streptococcus lactis)).